The chain runs to 1218 residues: Coatomer subunit alpha-1 (1218 aa).

WD repeat units follow at residues 7–48 (TKSN…DRFD), 49–88 (EHDG…CLFT), 91–132 (GHLD…AVLT), 133–172 (GHNH…KKTV), 202–241 (GHDR…AWEV), 246–285 (GHMN…GIQT), 288–326 (REHD…PAFS), 363–404 (SLNQ…AGRA), and 450–489 (PLPI…GELQ). Residues 857-882 (NGGDGFDAEEGEANEEDGEEGGWDLE) form a disordered region. Acidic residues predominate over residues 862-882 (FDAEEGEANEEDGEEGGWDLE).

In terms of assembly, oligomeric complex that consists of at least the alpha, beta, beta', gamma, delta, epsilon and zeta subunits.

Its subcellular location is the cytoplasm. The protein resides in the golgi apparatus membrane. It localises to the cytoplasmic vesicle. It is found in the COPI-coated vesicle membrane. Its function is as follows. The coatomer is a cytosolic protein complex that binds to dilysine motifs and reversibly associates with Golgi non-clathrin-coated vesicles, which further mediate biosynthetic protein transport from the ER, via the Golgi up to the trans Golgi network. Coatomer complex is required for budding from Golgi membranes, and is essential for the retrograde Golgi-to-ER transport of dilysine-tagged proteins. This chain is Coatomer subunit alpha-1, found in Oryza sativa subsp. japonica (Rice).